A 276-amino-acid chain; its full sequence is Proteasome subunit beta type-8 (276 aa).

Positions 1–33 (MALLDVCGAPRGQRPESALPVAGSGRRSDPGHY) are disordered. The propeptide at 1–72 (MALLDVCGAP…RNVQIEMAHG (72 aa)) is removed in mature form. Residue aspartate 5 is modified to Phosphothreonine. Threonine 73 functions as the Nucleophile in the catalytic mechanism.

This sequence belongs to the peptidase T1B family. In terms of assembly, the 26S proteasome consists of a 20S proteasome core and two 19S regulatory subunits. The 20S proteasome core is composed of 28 subunits that are arranged in four stacked rings, resulting in a barrel-shaped structure. The two end rings are each formed by seven alpha subunits, and the two central rings are each formed by seven beta subunits. The catalytic chamber with the active sites is on the inside of the barrel. Component of the immunoproteasome, where it displaces the equivalent housekeeping subunit PSMB5. Component of the spermatoproteasome, a form of the proteasome specifically found in testis. Directly interacts with POMP. Interacts with TAP1. (Microbial infection) Interacts with HIV-1 TAT protein. In terms of processing, autocleaved. The resulting N-terminal Thr residue of the mature subunit is responsible for the nucleophile proteolytic activity.

It localises to the cytoplasm. The protein resides in the nucleus. The enzyme catalyses Cleavage of peptide bonds with very broad specificity.. The proteasome is a multicatalytic proteinase complex which is characterized by its ability to cleave peptides with Arg, Phe, Tyr, Leu, and Glu adjacent to the leaving group at neutral or slightly basic pH. The proteasome has an ATP-dependent proteolytic activity. This subunit is involved in antigen processing to generate class I binding peptides. Replacement of PSMB5 by PSMB8 increases the capacity of the immunoproteasome to cleave model peptides after hydrophobic and basic residues. Involved in the generation of spliced peptides resulting from the ligation of two separate proteasomal cleavage products that are not contiguous in the parental protein. Acts as a major component of interferon gamma-induced sensitivity. Plays a key role in apoptosis via the degradation of the apoptotic inhibitor MCL1. May be involved in the inflammatory response pathway. In cancer cells, substitution of isoform 1 (E2) by isoform 2 (E1) results in immunoproteasome deficiency. Required for the differentiation of preadipocytes into adipocytes. In Homo sapiens (Human), this protein is Proteasome subunit beta type-8 (PSMB8).